Here is a 145-residue protein sequence, read N- to C-terminus: Basic phospholipase A2 PC14 (145 aa).

The signal sequence occupies residues 1-21 (MYPAHLLLLLAVCVSLLGASA). Positions 22–27 (IPPLPL) are excised as a propeptide. Disulfide bonds link Cys38/Cys98, Cys54/Cys144, Cys56/Cys72, Cys71/Cys125, Cys78/Cys118, Cys87/Cys111, and Cys105/Cys116. Tyr55, Gly57, and Gly59 together coordinate Ca(2+). Residue His75 is part of the active site. A Ca(2+)-binding site is contributed by Asp76. Residue Asp119 is part of the active site.

It belongs to the phospholipase A2 family. Group I subfamily. D49 sub-subfamily. Ca(2+) is required as a cofactor.

The protein localises to the secreted. It catalyses the reaction a 1,2-diacyl-sn-glycero-3-phosphocholine + H2O = a 1-acyl-sn-glycero-3-phosphocholine + a fatty acid + H(+). Its function is as follows. PLA2 catalyzes the calcium-dependent hydrolysis of the 2-acyl groups in 3-sn-phosphoglycerides. The chain is Basic phospholipase A2 PC14 from Laticauda laticaudata (Blue-ringed sea krait).